Consider the following 703-residue polypeptide: Polyribonucleotide nucleotidyltransferase (703 aa).

Mg(2+) is bound by residues D484 and D490. One can recognise a KH domain in the interval 551–610; sequence PQMIRMQIDPDKIREVIGPGGKTIHKIVDETGCKIDIEDDGSLFIMATDEEAAKKARFFV. Residues 620-694 enclose the S1 motif domain; it reads GKTYMGTVKR…RQGRVNLSRK (75 aa).

The protein belongs to the polyribonucleotide nucleotidyltransferase family. Requires Mg(2+) as cofactor.

The protein localises to the cytoplasm. The catalysed reaction is RNA(n+1) + phosphate = RNA(n) + a ribonucleoside 5'-diphosphate. Involved in mRNA degradation. Catalyzes the phosphorolysis of single-stranded polyribonucleotides processively in the 3'- to 5'-direction. The chain is Polyribonucleotide nucleotidyltransferase from Syntrophomonas wolfei subsp. wolfei (strain DSM 2245B / Goettingen).